The chain runs to 231 residues: Lipoprotein-releasing system ATP-binding protein LolD (231 aa).

Positions 9-230 (FSLKDVGKEY…LRAGELYDQN (222 aa)) constitute an ABC transporter domain. Residue 45 to 52 (GASGSGKS) participates in ATP binding.

This sequence belongs to the ABC transporter superfamily. Lipoprotein translocase (TC 3.A.1.125) family. In terms of assembly, the complex is composed of two ATP-binding proteins (LolD) and two transmembrane proteins (LolC and LolE).

The protein resides in the cell inner membrane. In terms of biological role, part of the ABC transporter complex LolCDE involved in the translocation of mature outer membrane-directed lipoproteins, from the inner membrane to the periplasmic chaperone, LolA. Responsible for the formation of the LolA-lipoprotein complex in an ATP-dependent manner. The protein is Lipoprotein-releasing system ATP-binding protein LolD of Oleidesulfovibrio alaskensis (strain ATCC BAA-1058 / DSM 17464 / G20) (Desulfovibrio alaskensis).